A 297-amino-acid polypeptide reads, in one-letter code: Ribosomal RNA small subunit methyltransferase H (297 aa).

Residues 34-36 (AGH), Asp54, Phe88, Asp106, and Gln113 contribute to the S-adenosyl-L-methionine site. Residues 272-297 (PLTAGEEETDRNPRARSAKLRAAEKK) are disordered.

The protein belongs to the methyltransferase superfamily. RsmH family.

The protein resides in the cytoplasm. It catalyses the reaction cytidine(1402) in 16S rRNA + S-adenosyl-L-methionine = N(4)-methylcytidine(1402) in 16S rRNA + S-adenosyl-L-homocysteine + H(+). Specifically methylates the N4 position of cytidine in position 1402 (C1402) of 16S rRNA. The polypeptide is Ribosomal RNA small subunit methyltransferase H (Acidobacterium capsulatum (strain ATCC 51196 / DSM 11244 / BCRC 80197 / JCM 7670 / NBRC 15755 / NCIMB 13165 / 161)).